The primary structure comprises 190 residues: Iron-sulfur assembly protein 1 (190 aa).

The tract at residues 49-71 (PSLKPSAAGSGSTAPKPVTEREI) is disordered. Residues cysteine 116, cysteine 180, and cysteine 182 each contribute to the Fe cation site.

It belongs to the HesB/IscA family.

It localises to the mitochondrion matrix. Involved in the assembly of mitochondrial and cytoplasmic iron-sulfur proteins. Probably involved in the binding of an intermediate of Fe/S cluster assembly. This is Iron-sulfur assembly protein 1 (isa1) from Schizosaccharomyces pombe (strain 972 / ATCC 24843) (Fission yeast).